Here is a 206-residue protein sequence, read N- to C-terminus: Superoxide dismutase [Mn] (206 aa).

The Mn(2+) site is built by H27, H82, D168, and H172.

Belongs to the iron/manganese superoxide dismutase family. In terms of assembly, homodimer. The cofactor is Mn(2+).

The catalysed reaction is 2 superoxide + 2 H(+) = H2O2 + O2. In terms of biological role, destroys superoxide anion radicals which are normally produced within the cells and which are toxic to biological systems. The polypeptide is Superoxide dismutase [Mn] (sodA) (Salmonella typhimurium (strain LT2 / SGSC1412 / ATCC 700720)).